The primary structure comprises 129 residues: Small ribosomal subunit protein uS11 (129 aa).

It belongs to the universal ribosomal protein uS11 family. In terms of assembly, part of the 30S ribosomal subunit. Interacts with proteins S7 and S18. Binds to IF-3.

Its function is as follows. Located on the platform of the 30S subunit, it bridges several disparate RNA helices of the 16S rRNA. Forms part of the Shine-Dalgarno cleft in the 70S ribosome. The chain is Small ribosomal subunit protein uS11 from Dinoroseobacter shibae (strain DSM 16493 / NCIMB 14021 / DFL 12).